The sequence spans 95 residues: Aspartyl/glutamyl-tRNA(Asn/Gln) amidotransferase subunit C (95 aa).

It belongs to the GatC family. In terms of assembly, heterotrimer of A, B and C subunits.

It catalyses the reaction L-glutamyl-tRNA(Gln) + L-glutamine + ATP + H2O = L-glutaminyl-tRNA(Gln) + L-glutamate + ADP + phosphate + H(+). The catalysed reaction is L-aspartyl-tRNA(Asn) + L-glutamine + ATP + H2O = L-asparaginyl-tRNA(Asn) + L-glutamate + ADP + phosphate + 2 H(+). Functionally, allows the formation of correctly charged Asn-tRNA(Asn) or Gln-tRNA(Gln) through the transamidation of misacylated Asp-tRNA(Asn) or Glu-tRNA(Gln) in organisms which lack either or both of asparaginyl-tRNA or glutaminyl-tRNA synthetases. The reaction takes place in the presence of glutamine and ATP through an activated phospho-Asp-tRNA(Asn) or phospho-Glu-tRNA(Gln). This is Aspartyl/glutamyl-tRNA(Asn/Gln) amidotransferase subunit C from Clostridium botulinum (strain Loch Maree / Type A3).